The chain runs to 159 residues: Large ribosomal subunit protein uL22c (159 aa).

It belongs to the universal ribosomal protein uL22 family. As to quaternary structure, part of the 50S ribosomal subunit.

The protein resides in the plastid. Its subcellular location is the chloroplast. In terms of biological role, this protein binds specifically to 23S rRNA. Its function is as follows. The globular domain of the protein is located near the polypeptide exit tunnel on the outside of the subunit, while an extended beta-hairpin is found that lines the wall of the exit tunnel in the center of the 70S ribosome. The sequence is that of Large ribosomal subunit protein uL22c (rpl22) from Ipomoea purpurea (Common morning glory).